The chain runs to 154 residues: 3-hydroxyacyl-[acyl-carrier-protein] dehydratase FabZ (154 aa).

The active site involves His-54.

It belongs to the thioester dehydratase family. FabZ subfamily.

Its subcellular location is the cytoplasm. The catalysed reaction is a (3R)-hydroxyacyl-[ACP] = a (2E)-enoyl-[ACP] + H2O. Its function is as follows. Involved in unsaturated fatty acids biosynthesis. Catalyzes the dehydration of short chain beta-hydroxyacyl-ACPs and long chain saturated and unsaturated beta-hydroxyacyl-ACPs. In Shewanella putrefaciens (strain CN-32 / ATCC BAA-453), this protein is 3-hydroxyacyl-[acyl-carrier-protein] dehydratase FabZ.